The following is an 87-amino-acid chain: Small ribosomal subunit protein bS16c (87 aa).

It belongs to the bacterial ribosomal protein bS16 family.

The protein localises to the plastid. It is found in the chloroplast. This chain is Small ribosomal subunit protein bS16c, found in Zygnema circumcarinatum (Green alga).